The primary structure comprises 363 residues: Phosphoserine aminotransferase (363 aa).

Arg-42 lines the L-glutamate pocket. Pyridoxal 5'-phosphate is bound by residues 76 to 77, Trp-102, Thr-156, Asp-175, and Gln-198; that span reads GR. Lys-199 is modified (N6-(pyridoxal phosphate)lysine). 240 to 241 is a pyridoxal 5'-phosphate binding site; it reads NT.

The protein belongs to the class-V pyridoxal-phosphate-dependent aminotransferase family. SerC subfamily. As to quaternary structure, homodimer. Pyridoxal 5'-phosphate is required as a cofactor.

The protein localises to the cytoplasm. The enzyme catalyses O-phospho-L-serine + 2-oxoglutarate = 3-phosphooxypyruvate + L-glutamate. It catalyses the reaction 4-(phosphooxy)-L-threonine + 2-oxoglutarate = (R)-3-hydroxy-2-oxo-4-phosphooxybutanoate + L-glutamate. Its pathway is amino-acid biosynthesis; L-serine biosynthesis; L-serine from 3-phospho-D-glycerate: step 2/3. The protein operates within cofactor biosynthesis; pyridoxine 5'-phosphate biosynthesis; pyridoxine 5'-phosphate from D-erythrose 4-phosphate: step 3/5. In terms of biological role, catalyzes the reversible conversion of 3-phosphohydroxypyruvate to phosphoserine and of 3-hydroxy-2-oxo-4-phosphonooxybutanoate to phosphohydroxythreonine. The polypeptide is Phosphoserine aminotransferase (Shewanella halifaxensis (strain HAW-EB4)).